The chain runs to 333 residues: MARHSFFCVDGHTCGNPVRLVAGGGPNLNGSTMMEKCAHFLAEYDWIRTGLMFEPRGHDMMSGSILYPPTRPDCDVAVLFIETSGCLPMCGHGTIGTVTMAIEQGLVTPKTPGKLNLDTPAGLVAIEYEQDGQYVERVRLTNVPAFLYAEGLEVECPDLGPIKVDVAYGGNFYAIVEPQENYTDMDDYSALQLIAWSPVLRQRLNEKYKFQHPELPDINRLSHILWTGKPKHPQAHARNAVFYGDKAIDRSPCGTGTSARMAQLAAKGKLKPGDEFIHESIIGSLFHGRVERAAEVAGRPAIVPSIAGWARMTGYNTIFIDDRDPFAHGFSAA.

Cys90 acts as the Proton acceptor in catalysis. Substrate is bound by residues 91-92 (GH) and Asp249. Residue Cys253 is the Proton donor of the active site. Position 254–255 (254–255 (GT)) interacts with substrate.

It belongs to the proline racemase family. As to quaternary structure, homodimer.

The enzyme catalyses trans-4-hydroxy-L-proline = cis-4-hydroxy-D-proline. Inhibited by iodoacetate, iodoacetamide and by high amounts (10 mM) of pyrrole-2-carboxylic acid (PYC). Not inhibited by PYC at 1 mM. In terms of biological role, allows intracellular utilization of 4-hydroxyproline, one of the major constituents of host collagen, by converting 4-hydroxy-L-proline to 4-hydroxy-D-proline, which can be further metabolized by intracellular 4-hydroxy-D-proline oxidases. Strong B-cell mitogen. Plays an important role in the regulation of intra- and extracellular amino acid pools, allowing the bacterium to profit from host precursors and enzymatic pathways. This chain is 4-hydroxyproline epimerase, found in Brucella melitensis biotype 1 (strain ATCC 23456 / CCUG 17765 / NCTC 10094 / 16M).